A 301-amino-acid chain; its full sequence is uncharacterized protein (301 aa).

This is an uncharacterized protein from Sinorhizobium fredii (strain NBRC 101917 / NGR234).